Here is a 231-residue protein sequence, read N- to C-terminus: 26S proteasome non-ATPase regulatory subunit 10 (231 aa).

ANK repeat units lie at residues 3–36 (GCVS…ATRT), 37–69 (DQDS…VNEK), 70–102 (DDAG…VNAV), 103–135 (NQNG…PDAK), 136–168 (NHYD…TNIQ), 169–201 (DTEG…IYIE), and 202–226 (NKEE…IAES).

In terms of assembly, part of transient complex containing PSMD10, PSMC4, PSMC5 and PAAF1 formed during the assembly of the 26S proteasome. Stays associated throughout the assembly of the PA700/19S RC and is released upon association with the 20S core. Interacts with PSMC4. Interacts with RB1. Interacts with CDK4. Interacts with MDM2. Interacts with RELA. Associates with a CDK4:CCND2 serine/threonine kinase complex. Interacts with ARHGDIA and increases the interaction between ARHGDIA and RHOA, hence promotes ARHGDIA inactivation of RHOA and ROCK.

It localises to the cytoplasm. It is found in the nucleus. Acts as a chaperone during the assembly of the 26S proteasome, specifically of the PA700/19S regulatory complex (RC). In the initial step of the base subcomplex assembly is part of an intermediate PSMD10:PSMC4:PSMC5:PAAF1 module which probably assembles with a PSMD5:PSMC2:PSMC1:PSMD2 module. Independently of the proteasome, regulates EGF-induced AKT activation through inhibition of the RHOA/ROCK/PTEN pathway, leading to prolonged AKT activation. Plays an important role in RAS-induced tumorigenesis. Functionally, acts as an oncoprotein by being involved in negative regulation of tumor suppressors RB1 and p53/TP53. Overexpression is leading to phosphorylation of RB1 and proteasomal degradation of RB1. Regulates CDK4-mediated phosphorylation of RB1 by competing with CDKN2A for binding with CDK4. Facilitates binding of MDM2 to p53/TP53 and the mono- and polyubiquitination of p53/TP53 by MDM2 suggesting a function in targeting the TP53:MDM2 complex to the 26S proteasome. Involved in p53-independent apoptosis. Involved in regulation of NF-kappa-B by retaining it in the cytoplasm. Binds to the NF-kappa-B component RELA and accelerates its XPO1/CRM1-mediated nuclear export. The sequence is that of 26S proteasome non-ATPase regulatory subunit 10 (Psmd10) from Rattus norvegicus (Rat).